The sequence spans 347 residues: GTPase Obg (347 aa).

In terms of domain architecture, Obg spans 1-159 (MKFVDEATIK…RVLRLELKLL (159 aa)). Residues 127 to 146 (NTRYKTSTNRAPRQSKPGTP) form a disordered region. A compositionally biased stretch (polar residues) spans 129–138 (RYKTSTNRAP). An OBG-type G domain is found at 160–334 (ADVGLLGLPN…LMQAIMKYLE (175 aa)). Residues 166 to 173 (GLPNAGKS), 191 to 195 (FTTLY), 213 to 216 (DIPG), 284 to 287 (NKID), and 315 to 317 (SAA) each bind GTP. Ser-173 and Thr-193 together coordinate Mg(2+).

The protein belongs to the TRAFAC class OBG-HflX-like GTPase superfamily. OBG GTPase family. Monomer. Requires Mg(2+) as cofactor.

It localises to the cytoplasm. In terms of biological role, an essential GTPase which binds GTP, GDP and possibly (p)ppGpp with moderate affinity, with high nucleotide exchange rates and a fairly low GTP hydrolysis rate. Plays a role in control of the cell cycle, stress response, ribosome biogenesis and in those bacteria that undergo differentiation, in morphogenesis control. The chain is GTPase Obg from Thioalkalivibrio sulfidiphilus (strain HL-EbGR7).